A 355-amino-acid chain; its full sequence is Proto-oncogene Wnt-3 (355 aa).

The signal sequence occupies residues 1–21 (MEPHLLGLLLGLLLSGTRVLA). Disulfide bonds link cysteine 80/cysteine 91, cysteine 131/cysteine 139, cysteine 141/cysteine 158, cysteine 206/cysteine 220, cysteine 208/cysteine 215, cysteine 284/cysteine 315, cysteine 300/cysteine 310, cysteine 314/cysteine 354, cysteine 330/cysteine 345, cysteine 332/cysteine 342, and cysteine 337/cysteine 338. Asparagine 90 is a glycosylation site (N-linked (GlcNAc...) asparagine). Serine 212 carries O-palmitoleoyl serine; by PORCN lipidation. N-linked (GlcNAc...) asparagine glycosylation is present at asparagine 301.

The protein belongs to the Wnt family. As to quaternary structure, forms a soluble 1:1 complex with AFM; this prevents oligomerization and is required for prolonged biological activity. The complex with AFM may represent the physiological form in body fluids. Interacts with PORCN. Interacts with WLS. Palmitoleoylation is required for efficient binding to frizzled receptors. Depalmitoleoylation leads to Wnt signaling pathway inhibition. As to expression, detected at low levels in adult brain. Dorsal portion of the neural tube, dorsal ectoderm, the branchial arches, and the limb buds.

It is found in the secreted. Its subcellular location is the extracellular space. It localises to the extracellular matrix. In terms of biological role, ligand for members of the frizzled family of seven transmembrane receptors. Functions in the canonical Wnt signaling pathway that results in activation of transcription factors of the TCF/LEF family. Required for normal gastrulation, formation of the primitive streak, and for the formation of the mesoderm during early embryogenesis. Required for normal formation of the apical ectodermal ridge and for normal embryonic limb development. In Mus musculus (Mouse), this protein is Proto-oncogene Wnt-3 (Wnt3).